The following is a 138-amino-acid chain: Acyl carrier protein 1, chloroplastic (138 aa).

A chloroplast-targeting transit peptide spans 1–56 (MASLSATTTVRVQPSSSSLHKLSQGNGRCSSIVCLDWGKSSFPTLRTSRRRSFISA). Positions 59-134 (KETIDKVCDI…QAADVIESLL (76 aa)) constitute a Carrier domain. At Ser94 the chain carries O-(pantetheine 4'-phosphoryl)serine.

Belongs to the acyl carrier protein (ACP) family. 4'-phosphopantetheine is transferred from CoA to a specific serine of apo-ACP by acpS. This modification is essential for activity because fatty acids are bound in thioester linkage to the sulfhydryl of the prosthetic group.

The protein resides in the plastid. It localises to the chloroplast. It functions in the pathway lipid metabolism; fatty acid biosynthesis. In terms of biological role, carrier of the growing fatty acid chain in fatty acid biosynthesis. The protein is Acyl carrier protein 1, chloroplastic (ACL1.1) of Spinacia oleracea (Spinach).